The chain runs to 190 residues: (S)-2-hydroxypropylphosphonic acid epoxidase (190 aa).

The region spanning 10–60 (KAHLEALLATRKMTLEHLQDVRHDATQVYFDGLEHLQNVAQYLAIPLSEFF) is the HTH cro/C1-type domain. Positions 20–40 (RKMTLEHLQDVRHDATQVYFD) form a DNA-binding region, H-T-H motif. Residues arginine 87, tyrosine 95, 125 to 128 (NGGH), and glutamate 132 each bind substrate. Histidine 128, glutamate 132, and histidine 171 together coordinate Fe cation. In terms of domain architecture, Cupin type-2 spans 128 to 176 (HGSREIVYVTRGAVRVRWVGDNDELKEDVLNEGDSIFILPNVPHSFTNH).

This sequence belongs to the non-heme iron-dependent dioxygenase family. In terms of assembly, homotrimer. Fe(2+) is required as a cofactor.

It catalyses the reaction (S)-2-hydroxypropylphosphonate + H2O2 = (1R,2S)-epoxypropylphosphonate + 2 H2O. The protein operates within antibiotic biosynthesis; fosfomycin biosynthesis. Its function is as follows. Non-heme-dependent dioxygenase that catalyzes the oxidative epoxidation of (S)-2-hydroxypropylphosphonate into (1R,2S)-epoxypropylphosphonate, the final step in the biosynthesis of fosfomycin antibiotic. The chain is (S)-2-hydroxypropylphosphonic acid epoxidase (hppE) from Pseudomonas syringae.